The sequence spans 294 residues: MQARFHTSWAELPASLQFALEPILSAENFPAMLTAEQVKTVKNISGLDDDALAFALLPLATACALTPISHFNVGAIARGKSGNFYFGANMEFRGVPLQQTIHAEQCAVTHAWLRGETNLVAITVNYTPCGHCRQFMNELNCGSELHIHLPGRPPSTLGQYLPDSFGPTDLAITTLLMDPVNHGYTLAETDPLTQAALNAANHSHAPYSQSHSGVALETTNGKIYAGRYAENAAFNPSLPPLQAALILANITGENCASIRRAVLVEGHNAVTSQWDTTLATLNALGCSAVKRVTF.

CMP/dCMP-type deaminase domains are found at residues 48 to 168 (DDDA…FGPT) and 187 to 294 (AETD…RVTF). Residue 89–91 (NME) participates in substrate binding. Residue His-102 participates in Zn(2+) binding. Glu-104 acts as the Proton donor in catalysis. Residues Cys-129 and Cys-132 each coordinate Zn(2+).

It belongs to the cytidine and deoxycytidylate deaminase family. In terms of assembly, homodimer. Requires Zn(2+) as cofactor.

It catalyses the reaction cytidine + H2O + H(+) = uridine + NH4(+). The catalysed reaction is 2'-deoxycytidine + H2O + H(+) = 2'-deoxyuridine + NH4(+). Functionally, this enzyme scavenges exogenous and endogenous cytidine and 2'-deoxycytidine for UMP synthesis. The chain is Cytidine deaminase from Yersinia pseudotuberculosis serotype IB (strain PB1/+).